Reading from the N-terminus, the 336-residue chain is 3-isopropylmalate dehydrogenase (336 aa).

Residues Arg87, Arg97, Arg121, and Asp211 each contribute to the substrate site. The Mg(2+) site is built by Asp211, Asp235, and Asp239. NAD(+) is bound at residue 271 to 283 (GSAPDIAGQGIAD).

It belongs to the isocitrate and isopropylmalate dehydrogenases family. LeuB type 2 subfamily. As to quaternary structure, homodimer. Mg(2+) is required as a cofactor. The cofactor is Mn(2+).

The protein localises to the cytoplasm. It catalyses the reaction (2R,3S)-3-isopropylmalate + NAD(+) = 4-methyl-2-oxopentanoate + CO2 + NADH. It functions in the pathway amino-acid biosynthesis; L-leucine biosynthesis; L-leucine from 3-methyl-2-oxobutanoate: step 3/4. In terms of biological role, catalyzes the oxidation of 3-carboxy-2-hydroxy-4-methylpentanoate (3-isopropylmalate) to 3-carboxy-4-methyl-2-oxopentanoate. The product decarboxylates to 4-methyl-2 oxopentanoate. This is 3-isopropylmalate dehydrogenase from Mycolicibacterium paratuberculosis (strain ATCC BAA-968 / K-10) (Mycobacterium paratuberculosis).